A 560-amino-acid chain; its full sequence is Cytosolic purine 5'-nucleotidase (560 aa).

Residue Asp-52 is the Nucleophile of the active site. IMP-binding residues include Asp-52 and Asp-54. Residues Asp-52 and Asp-54 each contribute to the Mg(2+) site. Residue Asp-54 is the Proton donor of the active site. Positions 144 and 154 each coordinate ATP. Residues Arg-202, Asp-206, Lys-215, Thr-249, Asn-250, Ser-251, and Lys-292 each contribute to the IMP site. Mg(2+) is bound at residue Asp-351. Ser-418 is subject to Phosphoserine. The ATP site is built by Gln-453 and Arg-456. Phosphoserine is present on residues Ser-502, Ser-511, and Ser-527. Residues 541–560 (PQEITHCHDEDDDEEEEEEE) are disordered. The segment at 548–560 (HDEDDDEEEEEEE) is required for tetramer assembly. Acidic residues predominate over residues 550 to 560 (EDDDEEEEEEE).

Belongs to the 5'(3')-deoxyribonucleotidase family. In terms of assembly, homotetramer. Mg(2+) is required as a cofactor.

The protein resides in the cytoplasm. It localises to the cytosol. The enzyme catalyses a ribonucleoside 5'-phosphate + H2O = a ribonucleoside + phosphate. It carries out the reaction a 2'-deoxyribonucleoside + a ribonucleoside 5'-phosphate = a ribonucleoside + a 2'-deoxyribonucleoside 5'-phosphate. It catalyses the reaction IMP + H2O = inosine + phosphate. The catalysed reaction is GMP + H2O = guanosine + phosphate. The enzyme catalyses dIMP + H2O = 2'-deoxyinosine + phosphate. It carries out the reaction dGMP + H2O = 2'-deoxyguanosine + phosphate. It catalyses the reaction XMP + H2O = xanthosine + phosphate. The catalysed reaction is inosine + GMP = guanosine + IMP. The enzyme catalyses dGMP + inosine = 2'-deoxyguanosine + IMP. It carries out the reaction dIMP + inosine = 2'-deoxyinosine + IMP. It catalyses the reaction inosine + UMP = uridine + IMP. The catalysed reaction is inosine + CMP = cytidine + IMP. The enzyme catalyses inosine + AMP = IMP + adenosine. With respect to regulation, allosterically activated by various compounds including ATP, 2,3-BPG/2,3-Bisphosphoglyceric acid and Ap4A/P1,P4-bis(5'-adenosyl) tetraphosphate. Binding of an allosteric activator is a prerequisiste to magnesium and substrate binding. Inhibited by inorganic phosphate. Functionally, broad specificity cytosolic 5'-nucleotidase that catalyzes the dephosphorylation of 6-hydroxypurine nucleoside 5'-monophosphates. In addition, possesses a phosphotransferase activity by which it can transfer a phosphate from a donor nucleoside monophosphate to an acceptor nucleoside, preferably inosine, deoxyinosine and guanosine. Has the highest activities for IMP and GMP followed by dIMP, dGMP and XMP. Could also catalyze the transfer of phosphates from pyrimidine monophosphates but with lower efficiency. Through these activities regulates the purine nucleoside/nucleotide pools within the cell. This chain is Cytosolic purine 5'-nucleotidase, found in Bos taurus (Bovine).